A 254-amino-acid polypeptide reads, in one-letter code: Triosephosphate isomerase (254 aa).

Residue 9 to 11 participates in substrate binding; that stretch reads NWK. His-98 serves as the catalytic Electrophile. The Proton acceptor role is filled by Glu-170. Substrate-binding positions include Gly-176, Ser-215, and 236–237; that span reads GG.

This sequence belongs to the triosephosphate isomerase family. Homodimer.

It is found in the cytoplasm. It catalyses the reaction D-glyceraldehyde 3-phosphate = dihydroxyacetone phosphate. The protein operates within carbohydrate biosynthesis; gluconeogenesis. It functions in the pathway carbohydrate degradation; glycolysis; D-glyceraldehyde 3-phosphate from glycerone phosphate: step 1/1. Functionally, involved in the gluconeogenesis. Catalyzes stereospecifically the conversion of dihydroxyacetone phosphate (DHAP) to D-glyceraldehyde-3-phosphate (G3P). This chain is Triosephosphate isomerase, found in Buchnera aphidicola subsp. Cinara cedri (strain Cc).